The chain runs to 360 residues: DNA primase large subunit PriL (360 aa).

[4Fe-4S] cluster contacts are provided by Cys237, Cys309, Cys318, and Cys325. Residues 340–360 (DDGDDDDLADWRDREDDDSPD) are disordered.

Belongs to the eukaryotic-type primase large subunit family. Heterodimer of a small subunit (PriS) and a large subunit (PriL). The cofactor is [4Fe-4S] cluster.

Regulatory subunit of DNA primase, an RNA polymerase that catalyzes the synthesis of short RNA molecules used as primers for DNA polymerase during DNA replication. Stabilizes and modulates the activity of the small subunit, increasing the rate of DNA synthesis, and conferring RNA synthesis capability. The DNA polymerase activity may enable DNA primase to also catalyze primer extension after primer synthesis. May also play a role in DNA repair. In Halobacterium salinarum (strain ATCC 29341 / DSM 671 / R1), this protein is DNA primase large subunit PriL.